A 360-amino-acid polypeptide reads, in one-letter code: DNA replication and repair protein RecF (360 aa).

ATP is bound at residue 30–37 (GQNGSGKT).

It belongs to the RecF family.

The protein resides in the cytoplasm. Its function is as follows. The RecF protein is involved in DNA metabolism; it is required for DNA replication and normal SOS inducibility. RecF binds preferentially to single-stranded, linear DNA. It also seems to bind ATP. The chain is DNA replication and repair protein RecF from Shewanella piezotolerans (strain WP3 / JCM 13877).